The primary structure comprises 469 residues: MTNLTLRNQLTPKQIVEKLDQYIIGQNGAKKSVAVALRNRYRRQLMDESIRDEIIPKNILMIGPTGVGKTEIARRIAKIVRAPFSKVEATKFTEVGYVGRDVESMVRDLVEVSVRLVKEEKMQLVRVKAEKNAEKRLIKLLAPSQKKKQTTSQNPLEALFGGMNQPDESPEEEVDQELKNKRSQIEWRLQNGELDDEIVTVEVKEQQNPMLDMMRGAGMDQMNGMQDALSGMFPAKKKKRKVTVREAKKILFEDEASKLIDADELAAEGIHRAEQMGMIFIDEIDKIASKEGGGNAQVSREGVQRDILPIVEGSQISTKYGTVNTEYILFIAAGAFHMSKPSDLIPELQGRFPIRIELDKLTQEDFYKILTEPDNALIKQYKALLKTEGIDLIFTKEAVERIAEIAFQVNQDSDNIGARRLHTILEKLLEDLLFEAPEINMESIKVTENYVNEKLAPIMQNKDLTQFIL.

Residues isoleucine 24, glycine 66 to glutamate 71, aspartate 282, glutamate 347, and arginine 419 contribute to the ATP site.

It belongs to the ClpX chaperone family. HslU subfamily. A double ring-shaped homohexamer of HslV is capped on each side by a ring-shaped HslU homohexamer. The assembly of the HslU/HslV complex is dependent on binding of ATP.

It is found in the cytoplasm. Its function is as follows. ATPase subunit of a proteasome-like degradation complex; this subunit has chaperone activity. The binding of ATP and its subsequent hydrolysis by HslU are essential for unfolding of protein substrates subsequently hydrolyzed by HslV. HslU recognizes the N-terminal part of its protein substrates and unfolds these before they are guided to HslV for hydrolysis. The protein is ATP-dependent protease ATPase subunit HslU of Listeria monocytogenes serovar 1/2a (strain ATCC BAA-679 / EGD-e).